Here is a 746-residue protein sequence, read N- to C-terminus: NAD(P)H-quinone oxidoreductase subunit 5, chloroplastic (746 aa).

The next 15 helical transmembrane spans lie at Trp-9–Val-29, Trp-40–Ile-60, Ile-89–Ile-109, Leu-122–Val-139, Ile-147–Thr-167, Gly-185–Phe-205, Asn-219–Ala-239, Thr-258–Ala-278, Leu-280–Ile-300, Leu-327–Ile-347, Thr-396–Ser-416, Trp-425–Tyr-445, Leu-546–Phe-566, Ile-605–Ile-625, and Tyr-722–Phe-742.

This sequence belongs to the complex I subunit 5 family. As to quaternary structure, NDH is composed of at least 16 different subunits, 5 of which are encoded in the nucleus.

Its subcellular location is the plastid. The protein localises to the chloroplast thylakoid membrane. It catalyses the reaction a plastoquinone + NADH + (n+1) H(+)(in) = a plastoquinol + NAD(+) + n H(+)(out). It carries out the reaction a plastoquinone + NADPH + (n+1) H(+)(in) = a plastoquinol + NADP(+) + n H(+)(out). In terms of biological role, NDH shuttles electrons from NAD(P)H:plastoquinone, via FMN and iron-sulfur (Fe-S) centers, to quinones in the photosynthetic chain and possibly in a chloroplast respiratory chain. The immediate electron acceptor for the enzyme in this species is believed to be plastoquinone. Couples the redox reaction to proton translocation, and thus conserves the redox energy in a proton gradient. This is NAD(P)H-quinone oxidoreductase subunit 5, chloroplastic (ndhF) from Calycanthus floridus var. glaucus (Eastern sweetshrub).